We begin with the raw amino-acid sequence, 150 residues long: Transcriptional repressor NrdR (150 aa).

A zinc finger lies at 3–34; that stretch reads CPFCGYEDTFVIDTREIEDQRVIRRRRECPNC. Positions 49 to 139 constitute an ATP-cone domain; the sequence is IMVIKKDGRR…VYQEFSSLEE (91 aa).

It belongs to the NrdR family. Zn(2+) is required as a cofactor.

Functionally, negatively regulates transcription of bacterial ribonucleotide reductase nrd genes and operons by binding to NrdR-boxes. This Dictyoglomus thermophilum (strain ATCC 35947 / DSM 3960 / H-6-12) protein is Transcriptional repressor NrdR.